A 319-amino-acid chain; its full sequence is Bidirectional sugar transporter SWEET15 (319 aa).

The Extracellular segment spans residues 1 to 10 (MAFMSMERST). The helical transmembrane segment at 11-31 (WAFTFGILGNLISLMVFLSPL) threads the bilayer. One can recognise a MtN3/slv 1 domain in the interval 13–99 (FTFGILGNLI…AMYLAYAPKS (87 aa)). Residues 32–50 (PTFYRVYRKKSTEGFQSTP) are Cytoplasmic-facing. A helical membrane pass occupies residues 51–71 (YVVTLFSCMLWMYYAFVKSGA). Glutamate 72 is a topological domain (extracellular). Residues 73–93 (LLVTINGVGCVIETVYLAMYL) form a helical membrane-spanning segment. The Cytoplasmic portion of the chain corresponds to 94–106 (AYAPKSARMLTAK). Residues 107-127 (MLLGLNIGLFGVIALVTLLLS) form a helical membrane-spanning segment. Topologically, residues 128–134 (RGELRVH) are extracellular. Residues 135-155 (VLGWICVAVSLSVFAAPLSII) traverse the membrane as a helical segment. In terms of domain architecture, MtN3/slv 2 spans 135–219 (VLGWICVAVS…ALYMAYRSKK (85 aa)). Residues 156–167 (RLVIRTKSVEFM) lie on the Cytoplasmic side of the membrane. A helical transmembrane segment spans residues 168–188 (PFSLSFFLVLSAVIWFLYGLL). The Extracellular segment spans residues 189 to 191 (KKD). The chain crosses the membrane as a helical span at residues 192 to 212 (VFVALPNVLGFVFGVAQMALY). At 213–319 (MAYRSKKPLV…KPDMAIVVEV (107 aa)) the chain is on the cytoplasmic side.

The protein belongs to the SWEET sugar transporter family. As to quaternary structure, forms homooligomers and/or heterooligomers.

It is found in the cell membrane. Mediates both low-affinity uptake and efflux of sugar across the plasma membrane. The protein is Bidirectional sugar transporter SWEET15 (SWEET15) of Oryza sativa subsp. indica (Rice).